The sequence spans 150 residues: uncharacterized protein (150 aa).

The signal sequence occupies residues 1-22 (MVIALKRFSFLASIATLTVLNA). Cysteine 23 carries the N-palmitoyl cysteine lipid modification. A lipid anchor (S-diacylglycerol cysteine) is attached at cysteine 23.

It belongs to the MG067/MG068/MG395 family.

The protein resides in the cell membrane. This is an uncharacterized protein from Mycoplasma pneumoniae (strain ATCC 29342 / M129 / Subtype 1) (Mycoplasmoides pneumoniae).